A 201-amino-acid chain; its full sequence is Pyridoxine/pyridoxamine 5'-phosphate oxidase (201 aa).

Residues 45–50 (RMVLLK), 65–66 (YT), Arg71, Lys72, and Gln94 contribute to the FMN site. Lys50 provides a ligand contact to substrate. Residues Tyr112, Arg116, and Ser120 each contribute to the substrate site. FMN is bound by residues 129 to 130 (QS) and Trp174. Substrate is bound at residue 180–182 (RLH). Position 184 (Arg184) interacts with FMN.

The protein belongs to the pyridoxamine 5'-phosphate oxidase family. In terms of assembly, homodimer. The cofactor is FMN.

The catalysed reaction is pyridoxamine 5'-phosphate + O2 + H2O = pyridoxal 5'-phosphate + H2O2 + NH4(+). The enzyme catalyses pyridoxine 5'-phosphate + O2 = pyridoxal 5'-phosphate + H2O2. Its pathway is cofactor metabolism; pyridoxal 5'-phosphate salvage; pyridoxal 5'-phosphate from pyridoxamine 5'-phosphate: step 1/1. The protein operates within cofactor metabolism; pyridoxal 5'-phosphate salvage; pyridoxal 5'-phosphate from pyridoxine 5'-phosphate: step 1/1. Functionally, catalyzes the oxidation of either pyridoxine 5'-phosphate (PNP) or pyridoxamine 5'-phosphate (PMP) into pyridoxal 5'-phosphate (PLP). The sequence is that of Pyridoxine/pyridoxamine 5'-phosphate oxidase from Rhodospirillum rubrum (strain ATCC 11170 / ATH 1.1.1 / DSM 467 / LMG 4362 / NCIMB 8255 / S1).